The following is a 1008-amino-acid chain: Envelopment polyprotein (1008 aa).

An N-terminal signal peptide occupies residues 1 to 17; the sequence is MVRTYLLLLLLCGPATP. Residues 18–394 lie on the Lumenal side of the membrane; sequence FFNHLMDVTR…NWANIHCFSK (377 aa). N-linked (GlcNAc...) asparagine; by host glycosylation is found at N34, N70, and N108. Disulfide bonds link C138–C269, C156–C166, C206–C247, C216–C226, C233–C238, C292–C295, C299–C368, and C319–C324. A glycan (N-linked (GlcNAc...) asparagine; by host) is linked at N208. Residues 395–415 form a helical membrane-spanning segment; it reads EQVLILVAVSSLCILLLASVL. Topologically, residues 416–496 are cytoplasmic; that stretch reads RALKVIATFT…VRQKMFNLTR (81 aa). The interval 419 to 465 is golgi retention signal; that stretch reads KVIATFTWKIIKPFWWILSLLCRTCSKRLNKRAERLKESIHSLEEGL. Residues 461-465 are important for correct targeting of the glycoproteins to the Golgi complex but not for heterodimerization; that stretch reads LEEGL. The internal signal sequence for glycoprotein C stretch occupies residues 497–513; the sequence is LSPVVVGMLCLACPVES. Disulfide bonds link C514-C555, C527-C537, C580-C677, C595-C789, C601-C650, C607-C657, C612-C639, C643-C648, C728-C742, C758-C771, C851-C924, and C861-C864. Residues 514-977 are Lumenal-facing; it reads CSDSISVTAS…GWFKASWLRA (464 aa). The tract at residues 601–607 is fusion loop; sequence CHLMGAC. Residues 644–655 form a fusion loop region; it reads GGALCQCFNMRP. 2 N-linked (GlcNAc...) asparagine; by host glycosylation sites follow: N691 and N696. 2 N-linked (GlcNAc...) asparagine; by host glycosylation sites follow: N912 and N949. Residues 978-998 traverse the membrane as a helical segment; sequence IWAILGGTVSLIIGVVIIYMV. At 999-1008 the chain is on the cytoplasmic side; the sequence is FTLCLKVKKS.

This sequence belongs to the phlebovirus envelope glycoprotein family. In terms of assembly, homodimer. Heterodimer with glycoprotein C. Homotrimer (postfusion). Heterodimer with glycoprotein N. Homotrimer (postfusion). Post-translationally, specific enzymatic cleavages in vivo yield mature proteins including glycoprotein C and glycoprotein N. In terms of processing, the cytoplasmic tail is Palmitoylated. Glycosylated. Contains principally poly-N-acetyllactosamine glycans. Post-translationally, glycosylated. Contains principally oligomannose-type glycans that can attach to host CD209/DC-SIGN. In terms of processing, palmitoylated.

The protein resides in the virion membrane. The protein localises to the host Golgi apparatus membrane. It localises to the host endoplasmic reticulum membrane. In terms of biological role, structural component of the virion that interacts with glycoprotein C. It shields the hydrophobic fusion loops of the glycoprotein C, preventing premature fusion. The glycoprotein protrusions are arranged on an icosahedral lattice, with T=12 triangulation. They are able to attach the virion to the host cell receptor CD209/DC-SIGN and to promote fusion of membranes with the late endosome after endocytosis of the virion. Plays a role in the packaging of ribonucleoproteins during virus assembly. Its function is as follows. Structural component of the virion that interacts with glycoprotein N. Acts as a class II fusion protein that is activated upon acidification and subsequent repositioning of the glycoprotein N. The glycoprotein protrusions are arranged on an icosahedral lattice, with T=12 triangulation. They are able to attach the virion to the host cell receptor CD209/DC-SIGN and to promote fusion of membranes with the late endosome after endocytosis of the virion. In Homo sapiens (Human), this protein is Envelopment polyprotein (GP).